A 2096-amino-acid polypeptide reads, in one-letter code: Tudor domain-containing protein 6 (2096 aa).

Residues 65 to 120 (ASASPGELCLVQVGLLWHRCRVVSRQAQESRVFLLDEGRTITAGAGSLAPGRREFF) form the Tudor 1 domain. Positions 287 to 316 (YRGSTGTGDENSTSATWEEREESPDKPGSP) are disordered. Over residues 288-302 (RGSTGTGDENSTSAT) the composition is skewed to polar residues. T293 bears the Phosphothreonine mark. Tudor domains are found at residues 310 to 369 (PDKP…YFRM), 536 to 593 (KPEP…FRQL), 816 to 875 (HQRN…FLKV), 1033 to 1088 (PLNP…AYDV), 1352 to 1411 (PLQR…NAIL), and 1567 to 1626 (CPYI…ELLS). S1722 and S2062 each carry phosphoserine. Residues 2026 to 2084 (AFTVGSKCVVWSSLRNTWSKCEILETAEEGTRVLNLSNGMEEIVNPENVWNGIPKLDKS) form the Tudor 8 domain.

Found in a mRNP complex (i.e. messenger ribonucleoproteins which correspond to mRNA with bound proteins), at least composed of TDRD1, TDRD6, TDRD7 and DDX4. Found in a complex, at least composed of PIWIL1, PIWIL2, DDX4 and TDRD6. Interacts with Tex19.1 and probably Tex19.2. Interacts with PRMT5. Interacts with SNRPB (when methylated); to trigger spliceosome formation. Undergoes proteolytic cleavage near the C-terminal by an unknown protease during the transition from meiosis I to meiosis II in primary spermatocytes.

The protein resides in the cytoplasm. Its function is as follows. Tudor domain-containing protein involved in germ cell development, more specifically the formation of chromatoid body (during spermiogenesis), Balbiani body (during oogenesis), germ plasm (upon fertilization), and for proper miRNA expression and spliceosome maturation. Essential for RNA-dependent helicase UPF1 localization to chromatoid body, for UPF1-UPF2 and UPF1-DDX4 interactions which are required for mRNA degradation, using the extended 3' UTR-triggered nonsense-mediated mRNA decay (NMD) pathway. Involved in spliceosome maturation and mRNA splicing in prophase I spermatocytes through interaction with arginine N-methyltransferase PRMT5 and symmetrically arginine dimethylated SNRPB (small nuclear ribonucleoprotein-associated protein). The polypeptide is Tudor domain-containing protein 6 (Homo sapiens (Human)).